Here is a 619-residue protein sequence, read N- to C-terminus: Glucokinase regulatory protein (619 aa).

2 SIS domains span residues 90–283 (VQEV…AESN) and 319–498 (TATS…LRGK). 107-109 (CGT) is a keto-D-fructose 6-phosphate binding site. Beta-D-fructose 1-phosphate contacts are provided by residues 109–110 (TS), Glu-153, 179–181 (SCG), and Glu-347. Residues 179-183 (SCGLS) and Glu-347 contribute to the keto-D-fructose 6-phosphate site. Positions 462–464 (ILF) are essential for interaction with GCK. A keto-D-fructose 6-phosphate-binding site is contributed by Lys-513. Position 513 (Lys-513) interacts with beta-D-fructose 1-phosphate.

This sequence belongs to the GCKR family. In terms of assembly, interacts (fructose 6-phosphate bound form) with gck.

The protein resides in the nucleus. Its subcellular location is the cytoplasm. The protein localises to the mitochondrion. Regulates glucokinase (gck) by forming an inactive complex with this enzyme. The affinity of gckr for gck is modulated by fructose metabolites: gckr with bound fructose 6-phosphate has increased affinity for gck, while gckr with bound fructose 1-phosphate has strongly decreased affinity for gck and does not inhibit gck activity. In Xenopus laevis (African clawed frog), this protein is Glucokinase regulatory protein.